A 541-amino-acid polypeptide reads, in one-letter code: Membrane protein insertase YidC (541 aa).

Helical transmembrane passes span 7–27 (LLFMALLFISFLIYQQWQVDY), 345–365 (LVQNWGLAIIGVTLVVKAVLY), 415–435 (LGGCLPILLQMPIFIALYWTF), 453–473 (LSAQDPYFILPILMGASMFLL), and 492–512 (FMPLIFMVFFLFFPAGLVLYW).

The protein belongs to the OXA1/ALB3/YidC family. Type 1 subfamily. As to quaternary structure, interacts with the Sec translocase complex via SecD. Specifically interacts with transmembrane segments of nascent integral membrane proteins during membrane integration.

The protein localises to the cell inner membrane. In terms of biological role, required for the insertion and/or proper folding and/or complex formation of integral membrane proteins into the membrane. Involved in integration of membrane proteins that insert both dependently and independently of the Sec translocase complex, as well as at least some lipoproteins. Aids folding of multispanning membrane proteins. This is Membrane protein insertase YidC from Histophilus somni (strain 2336) (Haemophilus somnus).